The primary structure comprises 104 residues: Phosphoribosyl-ATP pyrophosphatase (104 aa).

This sequence belongs to the PRA-PH family.

The protein localises to the cytoplasm. It carries out the reaction 1-(5-phospho-beta-D-ribosyl)-ATP + H2O = 1-(5-phospho-beta-D-ribosyl)-5'-AMP + diphosphate + H(+). The protein operates within amino-acid biosynthesis; L-histidine biosynthesis; L-histidine from 5-phospho-alpha-D-ribose 1-diphosphate: step 2/9. This chain is Phosphoribosyl-ATP pyrophosphatase, found in Methanoregula boonei (strain DSM 21154 / JCM 14090 / 6A8).